A 1876-amino-acid chain; its full sequence is Phenolphthiocerol/phthiocerol polyketide synthase subunit A (1876 aa).

A Carrier 1 domain is found at Ala-9–Glu-83. Ser-43 bears the O-(pantetheine 4'-phosphoryl)serine mark. The Ketosynthase family 3 (KS3) domain maps to Asp-101–Gln-526. Active-site for beta-ketoacyl synthase activity residues include Cys-273, His-408, and His-448. Residues Glu-624–Pro-950 form an acyltransferase region. Ser-720 serves as the catalytic For malonyltransferase activity. Residues His-997–Ser-1112 form an N-terminal hotdog fold region. In terms of domain architecture, PKS/mFAS DH spans His-997 to Val-1267. The Proton acceptor; for dehydratase activity role is filled by His-1027. The tract at residues Gln-1104 to Ala-1130 is disordered. The span at Ser-1106–Ser-1115 shows a compositional bias: low complexity. Residues Ala-1130 to Val-1267 are C-terminal hotdog fold. The active-site Proton donor; for dehydratase activity is the Asp-1186. Residues Ala-1491–Val-1728 form a beta-ketoacyl reductase region. An NADP(+)-binding site is contributed by Ala-1492–Leu-1551. Positions Glu-1759–Val-1836 constitute a Carrier 2 domain. Ser-1796 carries the post-translational modification O-(pantetheine 4'-phosphoryl)serine.

NADP(+) is required as a cofactor. Pantetheine 4'-phosphate serves as cofactor.

It carries out the reaction icosanoyl-[(phenol)carboxyphthiodiolenone synthase] + 2 (S)-methylmalonyl-CoA + 3 malonyl-CoA + 5 NADPH + 10 H(+) = C32-carboxyphthiodiolenone-[(phenol)carboxyphthiodiolenone synthase] + 5 CO2 + 5 NADP(+) + 5 CoA + 2 H2O. The enzyme catalyses docosanoyl-[(phenol)carboxyphthiodiolenone synthase] + 2 (S)-methylmalonyl-CoA + 3 malonyl-CoA + 5 NADPH + 10 H(+) = C34-carboxyphthiodiolenone-[(phenol)carboxyphthiodiolenone synthase] + 5 CO2 + 5 NADP(+) + 5 CoA + 2 H2O. The catalysed reaction is 17-(4-hydroxyphenyl)heptadecanoyl-[(phenol)carboxyphthiodiolenone synthase] + 2 (S)-methylmalonyl-CoA + 3 malonyl-CoA + 5 NADPH + 10 H(+) = C35-(phenol)carboxyphthiodiolenone-[(phenol)carboxyphthiodiolenone synthase] + 5 CO2 + 5 NADP(+) + 5 CoA + 2 H2O. It catalyses the reaction 19-(4-hydroxyphenyl)nonadecanoyl-[(phenol)carboxyphthiodiolenone synthase] + 2 (S)-methylmalonyl-CoA + 3 malonyl-CoA + 5 NADPH + 10 H(+) = C37-(phenol)carboxyphthiodiolenone-[(phenol)carboxyphthiodiolenone synthase] + 5 CO2 + 5 NADP(+) + 5 CoA + 2 H2O. It functions in the pathway lipid metabolism; fatty acid biosynthesis. Its function is as follows. Part of the PpsABCDE complex involved in the biosynthesis of the lipid core common to phthiocerols and phenolphthiocerols by successive additions of malonyl-CoA or methylmalonyl-CoA extender units. PpsA can accept as substrate the activated forms of either icosanoyl (C20), docosanoyl (C22) or lignoceroyl (C24) groups from FadD26, or a (4-hydroxyphenyl)-C17 or (4-hydroxyphenyl)-C19 fatty acyl from FadD29. PpsA initiates the biosynthesis and extends its substrate using a malonyl-CoA extender unit. The PpsB and PpsC proteins add the second and third malonyl-CoA extender units. PpsD adds an (R)-methylmalonyl unit and PpsE adds a second (R)-methylmalonyl unit. The incorporation of the methylmalonyl units results in formation of two branched methyl groups in the elongated product. The polypeptide is Phenolphthiocerol/phthiocerol polyketide synthase subunit A (ppsA) (Mycobacterium bovis (strain ATCC BAA-935 / AF2122/97)).